A 408-amino-acid polypeptide reads, in one-letter code: Argininosuccinate synthase (408 aa).

ATP is bound by residues 11–19 (AYSGGLDTS) and Ala38. L-citrulline-binding residues include Tyr91 and Ser96. Gly121 contacts ATP. Positions 123, 127, and 128 each coordinate L-aspartate. Residue Asn127 coordinates L-citrulline. Residues Arg131, Ser182, Ser191, Glu267, and Tyr279 each coordinate L-citrulline.

This sequence belongs to the argininosuccinate synthase family. Type 1 subfamily. As to quaternary structure, homotetramer.

The protein resides in the cytoplasm. The enzyme catalyses L-citrulline + L-aspartate + ATP = 2-(N(omega)-L-arginino)succinate + AMP + diphosphate + H(+). It participates in amino-acid biosynthesis; L-arginine biosynthesis; L-arginine from L-ornithine and carbamoyl phosphate: step 2/3. This chain is Argininosuccinate synthase, found in Azorhizobium caulinodans (strain ATCC 43989 / DSM 5975 / JCM 20966 / LMG 6465 / NBRC 14845 / NCIMB 13405 / ORS 571).